The primary structure comprises 1193 residues: Structural maintenance of chromosomes protein 3 homolog (1193 aa).

31–38 (GFNGSGKS) provides a ligand contact to ATP. An N6-acetyllysine modification is found at Lys-101. Coiled coils occupy residues 179 to 286 (SKKV…LNKT) and 332 to 483 (ILRV…EIIK). An SMC hinge domain is found at 505–631 (ENILGFLIDN…VKSLESCENY (127 aa)). Positions 665-993 (TVYNKLKELK…SHKNIKDMIQ (329 aa)) form a coiled coil.

Belongs to the SMC family. SMC3 subfamily. In terms of assembly, component of the cohesin complex. Post-translationally, acetylation at Lys-101 by ESCO1 is important for genome stability and S phase sister chromatid cohesion.

It is found in the nucleus. Its function is as follows. Central component of cohesin, a complex required for chromosome cohesion during the cell cycle. The cohesin complex may form a large proteinaceous ring within which sister chromatids can be trapped. At anaphase, the complex is cleaved and dissociates from chromatin, allowing sister chromatids to segregate. Cohesion is coupled to DNA replication and is involved in DNA repair. The cohesin complex also plays an important role in spindle pole assembly during mitosis and in chromosomes movement. In Plasmodium falciparum (isolate 3D7), this protein is Structural maintenance of chromosomes protein 3 homolog.